Consider the following 332-residue polypeptide: UDP-3-O-acylglucosamine N-acyltransferase (332 aa).

His235 acts as the Proton acceptor in catalysis.

The protein belongs to the transferase hexapeptide repeat family. LpxD subfamily. In terms of assembly, homotrimer.

The enzyme catalyses a UDP-3-O-[(3R)-3-hydroxyacyl]-alpha-D-glucosamine + a (3R)-hydroxyacyl-[ACP] = a UDP-2-N,3-O-bis[(3R)-3-hydroxyacyl]-alpha-D-glucosamine + holo-[ACP] + H(+). Its pathway is bacterial outer membrane biogenesis; LPS lipid A biosynthesis. In terms of biological role, catalyzes the N-acylation of UDP-3-O-acylglucosamine using 3-hydroxyacyl-ACP as the acyl donor. Is involved in the biosynthesis of lipid A, a phosphorylated glycolipid that anchors the lipopolysaccharide to the outer membrane of the cell. The sequence is that of UDP-3-O-acylglucosamine N-acyltransferase from Fusobacterium nucleatum subsp. nucleatum (strain ATCC 25586 / DSM 15643 / BCRC 10681 / CIP 101130 / JCM 8532 / KCTC 2640 / LMG 13131 / VPI 4355).